We begin with the raw amino-acid sequence, 487 residues long: Transmembrane protein 161B (487 aa).

N-linked (GlcNAc...) asparagine glycosylation is present at Asn-34. A helical membrane pass occupies residues 107-127; it reads LVDFTVAATVVYLVTEVYYNF. An N-linked (GlcNAc...) asparagine glycan is attached at Asn-135. 2 helical membrane-spanning segments follow: residues 136–156 and 169–189; these read ISLV…FSLT and SVCV…LIVT. A glycan (N-linked (GlcNAc...) asparagine) is linked at Asn-203. A run of 5 helical transmembrane segments spans residues 228 to 248, 265 to 285, 305 to 325, 367 to 387, and 459 to 479; these read FKFF…FPGL, ITQT…LLWV, LMTE…LCAL, VFYY…MLLH, and LSFL…FGLF.

It belongs to the TMEM161 family.

Its subcellular location is the cell membrane. In terms of biological role, essential for maintaining normal cardiac rhythm in the developing heart and for neonatal survival. Inhibits potassium and calcium currents in the cardiomyocytes, this assists in timely action potential repolarization and thereby maintains normal cardiac rhythm. The polypeptide is Transmembrane protein 161B (TMEM161B) (Homo sapiens (Human)).